Consider the following 114-residue polypeptide: PDZK1-interacting protein 1 (114 aa).

Topologically, residues 1–28 (MSVLSLVVLSLLMALPPASCQQGRGNLQ) are extracellular. A helical transmembrane segment spans residues 29-51 (PWMQGLIAVAVFLVLVAIAFAVN). Residues 52–114 (HFWCQEKPAP…EEGKVCSTPM (63 aa)) are Cytoplasmic-facing. Ser-85 carries the post-translational modification Phosphoserine.

The protein belongs to the PDZK1-interacting protein 1/SMIM24 family. Forms a heterodimer (via N-terminal transmembrane helix) with SLC5A2/SGLT2 (via TM13); this interaction enhances SLC5A2 transporter activity. Interacts with PDZK1.

It is found in the apical cell membrane. In terms of biological role, auxiliary protein of electrogenic Na(+)-coupled sugar symporter SLC5A2/SGLT2 and SLC5A1/SGLT1. Essential for the transporter activity of SLC5A2/SGLT2 but not SLC5A1/SGLT1. The sequence is that of PDZK1-interacting protein 1 from Bos taurus (Bovine).